Reading from the N-terminus, the 479-residue chain is Adenosylhomocysteinase (479 aa).

Substrate-binding residues include threonine 56, aspartate 133, and glutamate 199. An NAD(+)-binding site is contributed by 200 to 202 (TTT). Substrate-binding residues include lysine 229 and aspartate 233. NAD(+)-binding positions include asparagine 234, 263 to 268 (GYGDVG), glutamate 286, asparagine 321, 342 to 344 (IGH), and asparagine 390.

Belongs to the adenosylhomocysteinase family. As to quaternary structure, homotetramer. Requires NAD(+) as cofactor.

The catalysed reaction is S-adenosyl-L-homocysteine + H2O = L-homocysteine + adenosine. The protein operates within amino-acid biosynthesis; L-homocysteine biosynthesis; L-homocysteine from S-adenosyl-L-homocysteine: step 1/1. Adenosylhomocysteine is a competitive inhibitor of S-adenosyl-L-methionine-dependent methyl transferase reactions; therefore adenosylhomocysteinase may play a key role in the control of methylations via regulation of the intracellular concentration of adenosylhomocysteine. The sequence is that of Adenosylhomocysteinase from Plasmodium chabaudi chabaudi.